The following is a 265-amino-acid chain: Undecaprenyl-diphosphatase (265 aa).

7 consecutive transmembrane segments (helical) span residues Ile41 to Phe61, Leu75 to Ile95, Tyr104 to Ile124, Leu137 to Val157, Tyr180 to Thr200, Gly215 to Leu235, and Tyr244 to Ile264.

This sequence belongs to the UppP family.

The protein localises to the cell membrane. It catalyses the reaction di-trans,octa-cis-undecaprenyl diphosphate + H2O = di-trans,octa-cis-undecaprenyl phosphate + phosphate + H(+). In terms of biological role, catalyzes the dephosphorylation of undecaprenyl diphosphate (UPP). This is Undecaprenyl-diphosphatase from Saccharolobus islandicus (strain Y.N.15.51 / Yellowstone #2) (Sulfolobus islandicus).